Here is a 901-residue protein sequence, read N- to C-terminus: Protein translocase subunit SecA (901 aa).

ATP is bound by residues glutamine 89, 107 to 111 (GEGKT), and aspartate 502. Zn(2+)-binding residues include cysteine 884, cysteine 886, cysteine 895, and histidine 896.

This sequence belongs to the SecA family. In terms of assembly, monomer and homodimer. Part of the essential Sec protein translocation apparatus which comprises SecA, SecYEG and auxiliary proteins SecDF-YajC and YidC. It depends on Zn(2+) as a cofactor.

The protein resides in the cell inner membrane. Its subcellular location is the cytoplasm. It carries out the reaction ATP + H2O + cellular proteinSide 1 = ADP + phosphate + cellular proteinSide 2.. In terms of biological role, part of the Sec protein translocase complex. Interacts with the SecYEG preprotein conducting channel. Has a central role in coupling the hydrolysis of ATP to the transfer of proteins into and across the cell membrane, serving both as a receptor for the preprotein-SecB complex and as an ATP-driven molecular motor driving the stepwise translocation of polypeptide chains across the membrane. This is Protein translocase subunit SecA from Sinorhizobium fredii (strain NBRC 101917 / NGR234).